Here is a 321-residue protein sequence, read N- to C-terminus: Malate dehydrogenase (321 aa).

NAD(+) is bound by residues 10–15 (GSGMIG) and D34. Substrate contacts are provided by R83 and R89. NAD(+)-binding positions include N96 and 119–121 (ITN). Substrate contacts are provided by N121 and R152. Catalysis depends on H176, which acts as the Proton acceptor.

It belongs to the LDH/MDH superfamily. MDH type 3 family.

The catalysed reaction is (S)-malate + NAD(+) = oxaloacetate + NADH + H(+). In terms of biological role, catalyzes the reversible oxidation of malate to oxaloacetate. The chain is Malate dehydrogenase from Sinorhizobium fredii (strain NBRC 101917 / NGR234).